The sequence spans 468 residues: ATP synthase subunit beta (468 aa).

148-155 is an ATP binding site; the sequence is GGAGVGKT.

Belongs to the ATPase alpha/beta chains family. As to quaternary structure, F-type ATPases have 2 components, CF(1) - the catalytic core - and CF(0) - the membrane proton channel. CF(1) has five subunits: alpha(3), beta(3), gamma(1), delta(1), epsilon(1). CF(0) has three main subunits: a(1), b(2) and c(9-12). The alpha and beta chains form an alternating ring which encloses part of the gamma chain. CF(1) is attached to CF(0) by a central stalk formed by the gamma and epsilon chains, while a peripheral stalk is formed by the delta and b chains.

It is found in the cell membrane. The enzyme catalyses ATP + H2O + 4 H(+)(in) = ADP + phosphate + 5 H(+)(out). Its function is as follows. Produces ATP from ADP in the presence of a proton gradient across the membrane. The catalytic sites are hosted primarily by the beta subunits. This Stenotrophomonas maltophilia (strain K279a) protein is ATP synthase subunit beta.